A 117-amino-acid polypeptide reads, in one-letter code: Large ribosomal subunit protein bL20c (117 aa).

The protein belongs to the bacterial ribosomal protein bL20 family.

The protein resides in the plastid. It is found in the chloroplast. Binds directly to 23S ribosomal RNA and is necessary for the in vitro assembly process of the 50S ribosomal subunit. It is not involved in the protein synthesizing functions of that subunit. This chain is Large ribosomal subunit protein bL20c, found in Manihot esculenta (Cassava).